Here is a 310-residue protein sequence, read N- to C-terminus: tRNA dimethylallyltransferase (310 aa).

10–17 (GPTAVGKS) contributes to the ATP binding site. 12 to 17 (TAVGKS) lines the substrate pocket. An interaction with substrate tRNA region spans residues 35-38 (DSMQ).

The protein belongs to the IPP transferase family. As to quaternary structure, monomer. Mg(2+) is required as a cofactor.

It carries out the reaction adenosine(37) in tRNA + dimethylallyl diphosphate = N(6)-dimethylallyladenosine(37) in tRNA + diphosphate. In terms of biological role, catalyzes the transfer of a dimethylallyl group onto the adenine at position 37 in tRNAs that read codons beginning with uridine, leading to the formation of N6-(dimethylallyl)adenosine (i(6)A). The polypeptide is tRNA dimethylallyltransferase (Clostridium perfringens (strain 13 / Type A)).